The chain runs to 514 residues: Proline--tRNA ligase (514 aa).

This sequence belongs to the class-II aminoacyl-tRNA synthetase family. ProS type 3 subfamily. In terms of assembly, homodimer.

The protein resides in the cytoplasm. It catalyses the reaction tRNA(Pro) + L-proline + ATP = L-prolyl-tRNA(Pro) + AMP + diphosphate. Its function is as follows. Catalyzes the attachment of proline to tRNA(Pro) in a two-step reaction: proline is first activated by ATP to form Pro-AMP and then transferred to the acceptor end of tRNA(Pro). In Erythrobacter litoralis (strain HTCC2594), this protein is Proline--tRNA ligase.